Reading from the N-terminus, the 369-residue chain is Uroporphyrinogen decarboxylase (369 aa).

Substrate is bound by residues 36-40 (RQAGR), aspartate 86, tyrosine 162, serine 217, and histidine 342.

It belongs to the uroporphyrinogen decarboxylase family. Homodimer.

It localises to the cytoplasm. The enzyme catalyses uroporphyrinogen III + 4 H(+) = coproporphyrinogen III + 4 CO2. Its pathway is porphyrin-containing compound metabolism; protoporphyrin-IX biosynthesis; coproporphyrinogen-III from 5-aminolevulinate: step 4/4. Functionally, catalyzes the decarboxylation of four acetate groups of uroporphyrinogen-III to yield coproporphyrinogen-III. The chain is Uroporphyrinogen decarboxylase from Albidiferax ferrireducens (strain ATCC BAA-621 / DSM 15236 / T118) (Rhodoferax ferrireducens).